Reading from the N-terminus, the 391-residue chain is Na(+)/H(+) antiporter NhaA (391 aa).

The next 11 helical transmembrane spans lie at 14–34 (AGGI…NSPL), 59–79 (LLLW…GLEV), 95–115 (SLPT…YLFF), 124–144 (VGWA…MALL), 154–174 (VFLL…IALF), 177–197 (TDLS…LVAL), 213–233 (IILW…GVVI), 261–281 (FLIL…NVGF), 287–307 (PVPV…VLLF), 328–348 (IAPV…IASL), and 363–383 (IGIL…LSKV).

It belongs to the NhaA Na(+)/H(+) (TC 2.A.33) antiporter family.

Its subcellular location is the cell inner membrane. It carries out the reaction Na(+)(in) + 2 H(+)(out) = Na(+)(out) + 2 H(+)(in). Na(+)/H(+) antiporter that extrudes sodium in exchange for external protons. In Shewanella amazonensis (strain ATCC BAA-1098 / SB2B), this protein is Na(+)/H(+) antiporter NhaA.